The sequence spans 166 residues: Large ribosomal subunit protein uL10 (166 aa).

It belongs to the universal ribosomal protein uL10 family. Part of the ribosomal stalk of the 50S ribosomal subunit. The N-terminus interacts with L11 and the large rRNA to form the base of the stalk. The C-terminus forms an elongated spine to which L12 dimers bind in a sequential fashion forming a multimeric L10(L12)X complex.

Forms part of the ribosomal stalk, playing a central role in the interaction of the ribosome with GTP-bound translation factors. This chain is Large ribosomal subunit protein uL10, found in Bacillus mycoides (strain KBAB4) (Bacillus weihenstephanensis).